The chain runs to 344 residues: Phosphoribosylformylglycinamidine cyclo-ligase (344 aa).

It belongs to the AIR synthase family.

The protein resides in the cytoplasm. It catalyses the reaction 2-formamido-N(1)-(5-O-phospho-beta-D-ribosyl)acetamidine + ATP = 5-amino-1-(5-phospho-beta-D-ribosyl)imidazole + ADP + phosphate + H(+). It participates in purine metabolism; IMP biosynthesis via de novo pathway; 5-amino-1-(5-phospho-D-ribosyl)imidazole from N(2)-formyl-N(1)-(5-phospho-D-ribosyl)glycinamide: step 2/2. This Laribacter hongkongensis (strain HLHK9) protein is Phosphoribosylformylglycinamidine cyclo-ligase.